An 842-amino-acid polypeptide reads, in one-letter code: Microcephalin (842 aa).

Positions 1–93 (MAAPILKDVV…AHIDESLFPA (93 aa)) constitute a BRCT 1 domain. Residues Ser279, Ser287, Ser296, and Ser333 each carry the phosphoserine modification. Phosphothreonine is present on Thr335. The segment covering 346–359 (HSRPRSSSVKRKRV) has biased composition (basic residues). 3 disordered regions span residues 346-375 (HSRP…KRKR), 418-443 (PDNL…AQFS), and 563-624 (VGLK…PTRR). 2 stretches are compositionally biased toward polar residues: residues 434–443 (QLPSNPAQFS) and 566–582 (KSTQ…NSSE). Basic and acidic residues predominate over residues 586 to 608 (PSEHEPRSVVDCNVERSAEEKEN). 2 BRCT domains span residues 647-737 (SGKG…PFEL) and 758-840 (YRGT…NYLL).

As to quaternary structure, interacts with CDC27 and maybe other components of the APC/C complex. Interacts with histone variant H2AX under DNA damage conditions.

It is found in the cytoplasm. Its subcellular location is the cytoskeleton. The protein localises to the microtubule organizing center. It localises to the centrosome. Functionally, implicated in chromosome condensation and DNA damage induced cellular responses. May play a role in neurogenesis and regulation of the size of the cerebral cortex. The protein is Microcephalin of Macaca fascicularis (Crab-eating macaque).